The following is a 464-amino-acid chain: RCC1-like G exchanging factor-like protein (464 aa).

The transit peptide at 1-37 (MALVALVAGARLGRRLSGPGLGRGHWTAAGRSRSRRE) directs the protein to the mitochondrion. 7 RCC1 repeats span residues 58 to 124 (ADRV…LSSK), 128 to 191 (VTKV…VLTD), 193 to 247 (EGVF…FLTD), 248 to 300 (KGEV…AVSA), 302 to 353 (GGLF…VLNG), 354 to 411 (EGHV…ALTN), and 412 to 461 (KGEL…TLAK).

In terms of assembly, forms a regulatory protein-RNA complex, consisting of RCC1L, NGRN, RPUSD3, RPUSD4, TRUB2, FASTKD2 and 16S mt-rRNA. Interacts with 16S mt-rRNA; this interaction is direct. Interacts with OPA1; this interaction is direct. Asociates with the mitochondrial ribosome large subunit (mt-LSU). As to quaternary structure, asociates with the mitochondrial ribosome small subunit (mt-SSU). In terms of tissue distribution, ubiquitous.

It localises to the mitochondrion membrane. The protein resides in the mitochondrion inner membrane. Guanine nucleotide exchange factor (GEF) for mitochondrial dynamin-related GTPase OPA1. Activates OPA1, by exchanging bound GDP for free GTP, and drives OPA1 and MFN1-dependent mitochondrial fusion. Plays an essential role in mitochondrial ribosome biogenesis. As a component of a functional protein-RNA module, consisting of RCC1L, NGRN, RPUSD3, RPUSD4, TRUB2, FASTKD2 and 16S mitochondrial ribosomal RNA (16S mt-rRNA), controls 16S mt-rRNA abundance and is required for intra-mitochondrial translation of core subunits of the oxidative phosphorylation system. Functionally, plays an essential role in mitochondrial ribosome biogenesis via its association with GTPases that play a role in the assembly of the large ribosome subunit. In terms of biological role, plays an essential role in mitochondrial ribosome biogenesis via its association with GTPases that play a role in the assembly of the small ribosome subunit. In Homo sapiens (Human), this protein is RCC1-like G exchanging factor-like protein.